Here is a 579-residue protein sequence, read N- to C-terminus: Adipocyte plasma membrane-associated protein Hemomucin (579 aa).

Topologically, residues 1–6 (MGLLYA) are cytoplasmic. A helical membrane pass occupies residues 7 to 29 (LRVRIMNFMIFFLLIILMPGLPP). The Extracellular segment spans residues 30 to 579 (RTTFPFKDYI…INKQGVNVEL (550 aa)). N-linked (GlcNAc...) asparagine glycans are attached at residues N213 and N217. Residues 427–579 (GLEASIGVPP…INKQGVNVEL (153 aa)) are disordered. Residues 435–529 (PPSKATPKPK…PKPTTTTTPT (95 aa)) are compositionally biased toward low complexity.

Belongs to the strictosidine synthase family. In terms of assembly, interacts with sturkopf. Post-translationally, O-glycosylated. Glycosylated in the ovary of 4 day old females. Phosphorylated. In terms of tissue distribution, detected in ovaries (at protein level). In larvae, detected in the fat body, salivary glands, imaginal disks and gut (at protein level). In adults, expressed in the cardia, and in regions of the ventriculus including the area posterior to the cardia. In females also expressed in follicle cells.

It localises to the cell membrane. Its function is as follows. Transmembrane mucin that may be involved in cellular adhesion and the innate immune response. Membrane-tethered mucins are involved in many cell surface functions and form a physical barrier around cells to regulate cell-cell and/or cell-substrate interactions, and protect against pathogens or harmful extracellular conditions. This mucin likely acts in hemocyte adhesion as it is released from hemocytes during coagulation and is also able to bind lipophorin particles which form part of the hemocyte coagulogen. Able to induce expression of the antibacterial proteins in the presence of GalNAc-specific lectins and so probably also functions in the innate immune response. The chain is Adipocyte plasma membrane-associated protein Hemomucin from Drosophila melanogaster (Fruit fly).